Reading from the N-terminus, the 165-residue chain is P2Y purinoceptor 4 (165 aa).

Residues S1 to Y16 form a helical membrane-spanning segment. The Extracellular segment spans residues A17–K30. The helical transmembrane segment at F31–S51 threads the bilayer. Topologically, residues V52 to S74 are cytoplasmic. The chain crosses the membrane as a helical span at residues L75–V95. The Extracellular portion of the chain corresponds to T96–A124. N100 carries N-linked (GlcNAc...) asparagine glycosylation. Residues V125–A145 form a helical membrane-spanning segment. Over R146 to L165 the chain is Cytoplasmic.

The protein belongs to the G-protein coupled receptor 1 family.

It localises to the cell membrane. In terms of biological role, receptor for UTP and UDP coupled to G-proteins that activate a phosphatidylinositol-calcium second messenger system. The protein is P2Y purinoceptor 4 (P2RY4) of Cricetulus griseus (Chinese hamster).